A 401-amino-acid polypeptide reads, in one-letter code: Probable cysteine desulfurase (401 aa).

Lys-216 carries the post-translational modification N6-(pyridoxal phosphate)lysine.

This sequence belongs to the class-V pyridoxal-phosphate-dependent aminotransferase family. Csd subfamily. Pyridoxal 5'-phosphate serves as cofactor.

The enzyme catalyses (sulfur carrier)-H + L-cysteine = (sulfur carrier)-SH + L-alanine. This chain is Probable cysteine desulfurase (csd), found in Pyrococcus abyssi (strain GE5 / Orsay).